A 414-amino-acid chain; its full sequence is N-carbamoyl-L-amino-acid amidohydrolase (414 aa).

A divalent metal cation contacts are provided by histidine 83, aspartate 94, glutamate 129, and histidine 195. An N-carbamoyl-L-alpha-amino acid-binding residues include glutamine 198, histidine 231, asparagine 281, arginine 294, and glycine 363. The interval 214–333 (GIAGPSWFKV…QIEKNMAAVP (120 aa)) is involved in dimerization. Residue histidine 388 coordinates a divalent metal cation.

Belongs to the peptidase M20 family. In terms of assembly, homodimer. The cofactor is Mn(2+). It depends on Ni(2+) as a cofactor. Co(2+) is required as a cofactor. Fe(2+) serves as cofactor.

The enzyme catalyses an N-carbamoyl-L-alpha-amino acid + H2O + 2 H(+) = an L-alpha-amino acid + NH4(+) + CO2. It catalyses the reaction N-carbamoyl-L-methionine + H2O + 2 H(+) = L-methionine + NH4(+) + CO2. In terms of biological role, catalyzes the hydrolysis of N-carbamoyl-L-alpha-amino acids to free L-alpha-amino acids. Is strictly L-specific since it is inactive toward N-carbamoyl-D-alpha-amino acids. The chain is N-carbamoyl-L-amino-acid amidohydrolase from Pseudomonas sp. (strain NS671).